Consider the following 145-residue polypeptide: Probable flagellum biosynthesis repressor protein FlbT (145 aa).

Belongs to the FlbT family.

Its function is as follows. Has a post-transcriptional repressor function in flagellum biogenesis. Associates with the 5'-UTR of fljK mRNA and promotes its degradation. The sequence is that of Probable flagellum biosynthesis repressor protein FlbT from Chelativorans sp. (strain BNC1).